We begin with the raw amino-acid sequence, 406 residues long: Multifunctional CCA protein (406 aa).

Gly-8 and Arg-11 together coordinate ATP. CTP-binding residues include Gly-8 and Arg-11. Residues Asp-21 and Asp-23 each contribute to the Mg(2+) site. Residues Arg-91, Arg-138, and Arg-141 each coordinate ATP. Positions 91, 138, and 141 each coordinate CTP. One can recognise an HD domain in the interval 229–331; that stretch reads TGIHQEMVSD…LELLGRCDAL (103 aa).

It belongs to the tRNA nucleotidyltransferase/poly(A) polymerase family. Bacterial CCA-adding enzyme type 1 subfamily. In terms of assembly, monomer. Can also form homodimers and oligomers. Mg(2+) serves as cofactor. Ni(2+) is required as a cofactor.

The enzyme catalyses a tRNA precursor + 2 CTP + ATP = a tRNA with a 3' CCA end + 3 diphosphate. The catalysed reaction is a tRNA with a 3' CCA end + 2 CTP + ATP = a tRNA with a 3' CCACCA end + 3 diphosphate. Functionally, catalyzes the addition and repair of the essential 3'-terminal CCA sequence in tRNAs without using a nucleic acid template. Adds these three nucleotides in the order of C, C, and A to the tRNA nucleotide-73, using CTP and ATP as substrates and producing inorganic pyrophosphate. tRNA 3'-terminal CCA addition is required both for tRNA processing and repair. Also involved in tRNA surveillance by mediating tandem CCA addition to generate a CCACCA at the 3' terminus of unstable tRNAs. While stable tRNAs receive only 3'-terminal CCA, unstable tRNAs are marked with CCACCA and rapidly degraded. This chain is Multifunctional CCA protein, found in Stenotrophomonas maltophilia (strain K279a).